The sequence spans 484 residues: Cobyric acid synthase (484 aa).

The GATase cobBQ-type domain maps to 251-438; it reads ALKVAVPVLS…LHGLFGSDAY (188 aa). Cysteine 333 serves as the catalytic Nucleophile. Residue histidine 430 is part of the active site.

The protein belongs to the CobB/CobQ family. CobQ subfamily.

The protein operates within cofactor biosynthesis; adenosylcobalamin biosynthesis. In terms of biological role, catalyzes amidations at positions B, D, E, and G on adenosylcobyrinic A,C-diamide. NH(2) groups are provided by glutamine, and one molecule of ATP is hydrogenolyzed for each amidation. The sequence is that of Cobyric acid synthase from Rhizobium meliloti (strain 1021) (Ensifer meliloti).